A 743-amino-acid chain; its full sequence is Homeobox-leucine zipper protein PROTODERMAL FACTOR 2 (743 aa).

The tract at residues 1–72 (MYHPNMFESH…KKRYHRHTQR (72 aa)) is disordered. Over residues 30-39 (SREDDFETKS) the composition is skewed to basic and acidic residues. Basic residues predominate over residues 60–71 (PNKKKRYHRHTQ). A DNA-binding region (homeobox) is located at residues 62-121 (KKKRYHRHTQRQIQELESFFKECPHPDDKQRKELSRDLNLEPLQVKFWFQNKRTQMKAQS). Residues 110–192 (FQNKRTQMKA…DRISAIAAKY (83 aa)) are a coiled coil. The START domain occupies 244-476 (SETDKPIIVE…LERQCERLAS (233 aa)).

Belongs to the HD-ZIP homeobox family. Class IV subfamily. In terms of assembly, interacts with GAI/RGA2, RGA/RGA1/GRS, RGL2/SCL19 and ATML1. Binds to AIL7/PLT7, ANT, BBM and AIL1. As to expression, specifically expressed in the layer 1 (L1) of shoot meristems.

The protein localises to the nucleus. Probable transcription factor that binds to the L1 box DNA sequence 5'-TAAATG[CT]A-3'. Plays a role in maintaining the identity of L1 cells, possibly by interacting with their L1 box or other target-gene promoters; binds to the LIP1 gene promoter and stimulates its expression upon imbibition. Acts as a positive regulator of gibberellins (GAs)-regulated epidermal gene expression (e.g. LIP1, LIP2, LTP1, FDH and PDF1). Functionally redundant to ATML1. Involved, together with HDG proteins (e.g. HDG1, HDG2, HDG5 and HDG12), in the regulation of flower organs development by promoting the expression of APETALA 3 (AP3) in the epidermis and internal cell layers of developing flowers. Seems to promote cell differentiation. The chain is Homeobox-leucine zipper protein PROTODERMAL FACTOR 2 from Arabidopsis thaliana (Mouse-ear cress).